A 361-amino-acid chain; its full sequence is Biotin synthase (361 aa).

A disordered region spans residues 14-38; that stretch reads AQRTPEPLPPTSQGLARPSHDVVRG. In terms of domain architecture, Radical SAM core spans 86–315; that stretch reads HKGGPAALCG…ARDILVCGGR (230 aa). Residues Cys104, Cys108, and Cys111 each coordinate [4Fe-4S] cluster. Cys180 and Cys240 together coordinate [2Fe-2S] cluster.

This sequence belongs to the radical SAM superfamily. Biotin synthase family. As to quaternary structure, homodimer. The cofactor is [4Fe-4S] cluster. It depends on [2Fe-2S] cluster as a cofactor.

It carries out the reaction (4R,5S)-dethiobiotin + (sulfur carrier)-SH + 2 reduced [2Fe-2S]-[ferredoxin] + 2 S-adenosyl-L-methionine = (sulfur carrier)-H + biotin + 2 5'-deoxyadenosine + 2 L-methionine + 2 oxidized [2Fe-2S]-[ferredoxin]. It participates in cofactor biosynthesis; biotin biosynthesis; biotin from 7,8-diaminononanoate: step 2/2. In terms of biological role, catalyzes the conversion of dethiobiotin (DTB) to biotin by the insertion of a sulfur atom into dethiobiotin via a radical-based mechanism. In Nitratidesulfovibrio vulgaris (strain DP4) (Desulfovibrio vulgaris), this protein is Biotin synthase.